Reading from the N-terminus, the 461-residue chain is mRNA cap guanine-N(7) methyltransferase (461 aa).

The tract at residues 1–117 (MESSVKASVD…RKLQPQDALE (117 aa)) is disordered. Residues serine 11, serine 15, serine 16, and serine 58 each carry the phosphoserine modification. Composition is skewed to polar residues over residues 14–29 (ESSPGVNETAAASGQR) and 49–58 (EQNSSYVQDS). Positions 65–93 (LDVEIILDEKHSEDDGGASKRSKLERGGG) are enriched in basic and acidic residues. Serine 94 and serine 99 each carry phosphoserine. A Nuclear localization signal motif is present at residues 107–109 (KRK). The mRNA cap 0 methyltransferase domain occupies 152-460 (SRIFYLRNFN…IYLVFAFEKQ (309 aa)). An mRNA-binding site is contributed by 161-162 (NN). Residues lysine 165, glycine 190, aspartate 212, aspartate 246, glutamine 269, and tyrosine 274 each coordinate S-adenosyl-L-methionine.

The protein belongs to the class I-like SAM-binding methyltransferase superfamily. mRNA cap 0 methyltransferase family. In terms of assembly, interacts with importin alpha, leading to stimulate both RNA-binding and methyltransferase activity. Interaction with importin alpha and beta is required for its nuclear localization, importin beta dissociating in response to RanGTP, allowing RNMT-importin alpha to bind RNA substrates. Interacts with elongating form of polymerase II and RNGTT. Interacts with RAMAC, this interaction significantly enhances RNA-binding and cap methyltransferase activity.

Its subcellular location is the nucleus. It carries out the reaction a 5'-end (5'-triphosphoguanosine)-ribonucleoside in mRNA + S-adenosyl-L-methionine = a 5'-end (N(7)-methyl 5'-triphosphoguanosine)-ribonucleoside in mRNA + S-adenosyl-L-homocysteine. Its activity is regulated as follows. Methyltransferase activity is activated by RAMAC. Functionally, catalytic subunit of the mRNA-capping methyltransferase RNMT:RAMAC complex that methylates the N7 position of the added guanosine to the 5'-cap structure of mRNAs. Binds RNA containing 5'-terminal GpppC. The sequence is that of mRNA cap guanine-N(7) methyltransferase (Rnmt) from Rattus norvegicus (Rat).